A 153-amino-acid polypeptide reads, in one-letter code: MEKLKEFRGIKEHLGVFREAVKDAERIGFAGVPGVCTPFAQLFAYAVRDKDNIFIPNTDFSKARKLEVTEYGVELGEISPGNVDVLVLLGGLSMPGIGSDIEDVKKLVEDALEEGGELMGLCYMDMFARAGWYELLDFDCVINADIDGYVLRG.

It to M.jannaschii MJ1183.

This is an uncharacterized protein from Methanothermobacter thermautotrophicus (strain ATCC 29096 / DSM 1053 / JCM 10044 / NBRC 100330 / Delta H) (Methanobacterium thermoautotrophicum).